The chain runs to 418 residues: Glutamyl-tRNA reductase (418 aa).

Residues 57–60 (TCNR), S113, 118–120 (DFE), and Q124 contribute to the substrate site. Residue C58 is the Nucleophile of the active site. 193-198 (GTGKIG) contacts NADP(+).

It belongs to the glutamyl-tRNA reductase family. Homodimer.

It carries out the reaction (S)-4-amino-5-oxopentanoate + tRNA(Glu) + NADP(+) = L-glutamyl-tRNA(Glu) + NADPH + H(+). It participates in porphyrin-containing compound metabolism; protoporphyrin-IX biosynthesis; 5-aminolevulinate from L-glutamyl-tRNA(Glu): step 1/2. Functionally, catalyzes the NADPH-dependent reduction of glutamyl-tRNA(Glu) to glutamate 1-semialdehyde (GSA). This chain is Glutamyl-tRNA reductase, found in Christiangramia forsetii (strain DSM 17595 / CGMCC 1.15422 / KT0803) (Gramella forsetii).